Reading from the N-terminus, the 613-residue chain is Kelch-like protein 36 (613 aa).

The 68-residue stretch at 45-112 (CDVVLVVEEQ…LYSSELELDG (68 aa)) folds into the BTB domain. Positions 147–249 (YLYLQELASI…PEDILLQRVK (103 aa)) constitute a BACK domain. Kelch repeat units follow at residues 294-343 (CLLF…VLGG), 344-395 (FIFV…SIED), 396-442 (MLVA…IYKD), 444-491 (VYIS…SLGD), 492-544 (SIYS…VWQG), and 545-593 (RIYI…VCAL).

In terms of assembly, interacts with CUL3.

It functions in the pathway protein modification; protein ubiquitination. In terms of biological role, probable substrate-specific adapter of an E3 ubiquitin-protein ligase complex which mediates the ubiquitination and subsequent proteasomal degradation of target proteins. This is Kelch-like protein 36 (Klhl36) from Rattus norvegicus (Rat).